The primary structure comprises 692 residues: Protein arginine N-methyltransferase 7 (692 aa).

SAM-dependent MTase PRMT-type domains follow at residues 14–345 (SLEW…YCVW) and 358–684 (SAYQ…ITME). Arginine 32 carries the omega-N-methylarginine modification. Active-site residues include glutamate 144 and glutamate 153.

It belongs to the class I-like SAM-binding methyltransferase superfamily. Protein arginine N-methyltransferase family. PRMT7 subfamily. As to quaternary structure, homodimer and heterodimer. Interacts with PRMT5 and SNRPD3. Interacts with CTCFL.

It is found in the cytoplasm. Its subcellular location is the cytosol. The protein localises to the nucleus. It catalyses the reaction L-arginyl-[protein] + S-adenosyl-L-methionine = N(omega)-methyl-L-arginyl-[protein] + S-adenosyl-L-homocysteine + H(+). Its function is as follows. Arginine methyltransferase that can both catalyze the formation of omega-N monomethylarginine (MMA) and symmetrical dimethylarginine (sDMA), with a preference for the formation of MMA. Specifically mediates the symmetrical dimethylation of arginine residues in the small nuclear ribonucleoproteins Sm D1 (SNRPD1) and Sm D3 (SNRPD3); such methylation being required for the assembly and biogenesis of snRNP core particles. Specifically mediates the symmetric dimethylation of histone H4 'Arg-3' to form H4R3me2s. Plays a role in gene imprinting by being recruited by CTCFL at the H19 imprinted control region (ICR) and methylating histone H4 to form H4R3me2s, possibly leading to recruit DNA methyltransferases at these sites. May also play a role in embryonic stem cell (ESC) pluripotency. Also able to mediate the arginine methylation of histone H2A and myelin basic protein (MBP) in vitro; the relevance of such results is however unclear in vivo. This Mus musculus (Mouse) protein is Protein arginine N-methyltransferase 7 (Prmt7).